A 797-amino-acid chain; its full sequence is Kinesin-like protein Klp68D (797 aa).

The Kinesin motor domain maps to 19-344 (CVQVVVRCRP…LRYASRAKSI (326 aa)). 106–113 (GQTGTGKT) contacts ATP. A coiled-coil region spans residues 350–384 (KNEDPQDAKLKEYQEEIERLKRLIAPQQQQRSEKQ). Disordered stretches follow at residues 371–450 (RLIA…ELER), 610–656 (SSFP…PSSL), and 722–797 (ANSS…LVNK). The segment covering 386–396 (TIKKQRVKKPK) has biased composition (basic residues). Over residues 417 to 431 (QVDEDRDSDGDGAES) the composition is skewed to acidic residues. Positions 432–450 (ESDKENEAEVAKSNEELER) are enriched in basic and acidic residues. Residues 432–580 (ESDKENEAEV…LVKELKRQLL (149 aa)) adopt a coiled-coil conformation. The span at 626–638 (GYRRPVSHPQRRR) shows a compositional bias: basic residues. Low complexity predominate over residues 782–791 (KKPASAYPKA).

The protein belongs to the TRAFAC class myosin-kinesin ATPase superfamily. Kinesin family. Kinesin II subfamily.

It is found in the cytoplasm. The protein resides in the cytoskeleton. Its function is as follows. Plus-end directed microtubule motor that may be used for anterograde axonal transport and could conceivably move cargos in fly neurons different than those moved by kinesin heavy chain or other plus-end directed motors. The sequence is that of Kinesin-like protein Klp68D from Drosophila pseudoobscura pseudoobscura (Fruit fly).